The sequence spans 367 residues: Methylated-thiol--coenzyme M methyltransferase (367 aa).

Zn(2+) contacts are provided by histidine 236, cysteine 238, and cysteine 313.

Belongs to the uroporphyrinogen decarboxylase family. As to quaternary structure, homodimer. Zn(2+) is required as a cofactor.

It catalyses the reaction methanethiol + coenzyme M = methyl-coenzyme M + hydrogen sulfide + H(+). Its function is as follows. Methyltransferase involved in methanogenesis from methylated-thiols. Catalyzes two successive steps: mediates the transfer of a methyl group from the substrate to the cobalt cofactor of a methylated-thiol-specific corrinoid protein (MtsB), and the subsequent transfer of the methyl group from the corrinoid protein to coenzyme M. The sequence is that of Methylated-thiol--coenzyme M methyltransferase (mtsA) from Methanosarcina mazei (strain ATCC BAA-159 / DSM 3647 / Goe1 / Go1 / JCM 11833 / OCM 88) (Methanosarcina frisia).